The chain runs to 482 residues: UDP-N-acetylmuramate--L-alanine ligase (482 aa).

ATP is bound at residue 129–135; sequence GTHGKTT.

The protein belongs to the MurCDEF family.

It localises to the cytoplasm. It carries out the reaction UDP-N-acetyl-alpha-D-muramate + L-alanine + ATP = UDP-N-acetyl-alpha-D-muramoyl-L-alanine + ADP + phosphate + H(+). The protein operates within cell wall biogenesis; peptidoglycan biosynthesis. In terms of biological role, cell wall formation. This Acinetobacter baylyi (strain ATCC 33305 / BD413 / ADP1) protein is UDP-N-acetylmuramate--L-alanine ligase.